The sequence spans 321 residues: NADPH-dependent D-xylose reductase (321 aa).

Residue Tyr50 is the Proton donor of the active site. Residue His112 coordinates substrate. NADP(+) is bound by residues 167-168 (SN), 216-225 (SSFGPQSFVE), and 272-282 (KSNKKERLLGN).

It belongs to the aldo/keto reductase family.

The enzyme catalyses xylitol + NAD(+) = D-xylose + NADH + H(+). The catalysed reaction is xylitol + NADP(+) = D-xylose + NADPH + H(+). Its pathway is carbohydrate metabolism; D-xylose degradation. Its function is as follows. Reduces D-xylose into xylitol. Preferentially utilizes NADPH as a cosubstrate. In Candida boidinii (Yeast), this protein is NADPH-dependent D-xylose reductase (XYL1).